The following is a 482-amino-acid chain: Putative dipeptidase NECHADRAFT_87110 (482 aa).

Residues 1–21 (MADTQTPNLQNTAEGDANTSA) are compositionally biased toward polar residues. The interval 1–24 (MADTQTPNLQNTAEGDANTSAENE) is disordered. Asparagine 18 is a glycosylation site (N-linked (GlcNAc...) asparagine). A helical transmembrane segment spans residues 41–61 (WLRYPFLVAGIALFLGPFSFF). Zn(2+) contacts are provided by histidine 90, aspartate 92, and glutamate 201. Cysteine 141 and cysteine 230 are disulfide-bonded. Histidine 228 provides a ligand contact to substrate. Zn(2+)-binding residues include histidine 272 and histidine 293. Arginine 304 and aspartate 364 together coordinate substrate.

Belongs to the metallo-dependent hydrolases superfamily. Peptidase M19 family. Zn(2+) is required as a cofactor.

The protein localises to the membrane. It carries out the reaction an L-aminoacyl-L-amino acid + H2O = 2 an L-alpha-amino acid. Functionally, hydrolyzes a wide range of dipeptides. This chain is Putative dipeptidase NECHADRAFT_87110, found in Fusarium vanettenii (strain ATCC MYA-4622 / CBS 123669 / FGSC 9596 / NRRL 45880 / 77-13-4) (Fusarium solani subsp. pisi).